The chain runs to 270 residues: MIKWLWKANKPQAEMLAQWHEALNIPLLAPLNEPEQQRLVSVASQLLQQKRFIPLQGLILTPLMQARLALLFALPVMELGAKWLDGFHEVLIYPSPFIVAEDWQDDLGLVHSGQSVQSGQSWEQGPIVLNWQDIQDSFDLSGFNLVIHEAAHKLDMRNGGHSNGVPPIAMRDVAVWEHDLHHAMDNIQDEIDMVGVEGASMDAYAASNPAECFAVLSEYFFSAPELLEGRFPAVYQHFCRFYRQDPLARLKRWENSLADNPPPENTHSHR.

Residues histidine 111, histidine 148, histidine 152, and glutamate 211 each coordinate Zn(2+).

Belongs to the MtfA family. In terms of assembly, interacts with Mlc. Zn(2+) is required as a cofactor.

It is found in the cytoplasm. Functionally, involved in the modulation of the activity of the glucose-phosphotransferase system (glucose-PTS). Interacts with the transcriptional repressor Mlc, preventing its interaction with DNA and leading to the modulation of expression of genes regulated by Mlc, including ptsG, which encodes the PTS system glucose-specific EIICB component. Its function is as follows. Shows zinc-dependent metallopeptidase activity. The chain is Mlc titration factor A from Yersinia pestis bv. Antiqua (strain Nepal516).